The following is a 310-amino-acid chain: Nucleotide-binding protein BLA_1368 (310 aa).

Positions 1 to 21 are disordered; the sequence is MQSARNEQRGTGPESPHAASP. Residue 32-39 participates in ATP binding; it reads GMSGAGRS. Residue 83–86 participates in GTP binding; sequence DVRS.

The protein belongs to the RapZ-like family.

In terms of biological role, displays ATPase and GTPase activities. This is Nucleotide-binding protein BLA_1368 from Bifidobacterium animalis subsp. lactis (strain AD011).